The chain runs to 87 residues: Potassium channel toxin TsTXK-beta/Cryptide TyPep-16 (87 aa).

The first 19 residues, 1 to 19 (MERKLALLLILGMVTLASC), serve as a signal peptide directing secretion. Residues 53 to 87 (QFGCPAYEGYCNDHCNDIERKDGECHGFKCKCAKD) form the BetaSPN-type CS-alpha/beta domain. Disulfide bonds link cysteine 56–cysteine 77, cysteine 63–cysteine 82, and cysteine 67–cysteine 84.

The protein belongs to the long chain scorpion toxin family. Class 1 subfamily. Expressed by the venom gland.

It localises to the secreted. Functionally, specifically blocks voltage-gated potassium channels Kv4.2/KCND2. When measured at the peak current, the blocking effect of this toxin is about 65% and shows an IC(50)=652 nM. However, when measured at a later moment of the depolarising test pulse (500 ms), a 100% block of the current is observed with an IC(50)=313 nM. This may indicate a preference of the toxin for binding the inactivated state of the channel. The inhibition is completely reversible. In vivo, intraplantar injection into rat paw induces overt nociception (licking and lifting behaviors) and decreases the mechanical nociceptive threshold (hyperalgesia). Furthermore, the hyperalgesia is prolonged when intrathecal injections are performed. Induces discomfort and anxiety in mice, as it moderately diminishes locomotion (but has no effect on rearing behavior). Does not cause hemolysis, mast cell degranulation, LDH release, and does not have antimicrobial activity. Does not cause edema and pain. Its function is as follows. Does not induce hemolytic activity, lactate dehydrogenase (LDH) release from mast cells, mast cell degranulation, and antimicrobial effects. In vivo, injection into mice causes moderate edema formation, but induces very weak or no change in nociceptive sensibility. It also reduces mice locomotion, suggesting an increase in anxiety, but causes no alteration in rearing (standing on hind limbs). The protein is Potassium channel toxin TsTXK-beta/Cryptide TyPep-16 of Tityus serrulatus (Brazilian scorpion).